The sequence spans 446 residues: Phosphoglucosamine mutase (446 aa).

The active-site Phosphoserine intermediate is the serine 103. Residues serine 103, aspartate 242, aspartate 244, and aspartate 246 each contribute to the Mg(2+) site. Serine 103 is subject to Phosphoserine.

This sequence belongs to the phosphohexose mutase family. It depends on Mg(2+) as a cofactor. Post-translationally, activated by phosphorylation.

The enzyme catalyses alpha-D-glucosamine 1-phosphate = D-glucosamine 6-phosphate. In terms of biological role, catalyzes the conversion of glucosamine-6-phosphate to glucosamine-1-phosphate. In Vibrio atlanticus (strain LGP32) (Vibrio splendidus (strain Mel32)), this protein is Phosphoglucosamine mutase.